An 865-amino-acid chain; its full sequence is General transcription factor 3C polypeptide 5 (865 aa).

Disordered regions lie at residues 1–21 (MNDETNKNNSNINNNNNNNNS), 111–163 (RPNK…NEKF), 191–215 (NNNTKSESDNVNDSSSSSSSKTVPI), 391–522 (QDNH…NKEG), and 669–865 (DNKM…EESE). 5 stretches are compositionally biased toward low complexity: residues 7–21 (KNNSNINNNNNNNNS), 115–126 (QQTQTQTQTQTQ), 140–158 (QSPKTTSRSKQQQQQQQPQ), 199–210 (DNVNDSSSSSSS), and 401–411 (SKNNNNNNNNK). Composition is skewed to basic and acidic residues over residues 412–439 (DSIKNKEKDNSNKEDKEHKEDKEDKQEE) and 448–489 (NNEK…KGDD). Composition is skewed to low complexity over residues 508-521 (EGNNNNNNNNNNKE) and 677-696 (RSNTSTATTTSTKSTQPKST). Basic and acidic residues-rich tracts occupy residues 697 to 713 (QPKEPKLKSTQPKEPRP), 757 to 766 (QNKEIDESLK), and 773 to 786 (MEKDNEYLHGKNEE). Acidic residues-rich tracts occupy residues 800-820 (DYDDDDDDEDKPFELLDDFDG) and 839-865 (EDSEEDESDFDEEEEEEEEDFEFEESE).

The protein belongs to the TFIIIC subunit 5 family. In terms of assembly, part of the TFIIIC complex.

Its subcellular location is the nucleus. Involved in RNA polymerase III-mediated transcription. Integral, tightly associated component of the DNA-binding TFIIIC2 subcomplex that directly binds tRNA and virus-associated RNA promoters. This Dictyostelium discoideum (Social amoeba) protein is General transcription factor 3C polypeptide 5 (gtf3c5).